A 121-amino-acid chain; its full sequence is Large ribosomal subunit protein bL12 (121 aa).

This sequence belongs to the bacterial ribosomal protein bL12 family. Homodimer. Part of the ribosomal stalk of the 50S ribosomal subunit. Forms a multimeric L10(L12)X complex, where L10 forms an elongated spine to which 2 to 4 L12 dimers bind in a sequential fashion. Binds GTP-bound translation factors.

Its function is as follows. Forms part of the ribosomal stalk which helps the ribosome interact with GTP-bound translation factors. Is thus essential for accurate translation. This Shewanella pealeana (strain ATCC 700345 / ANG-SQ1) protein is Large ribosomal subunit protein bL12.